A 623-amino-acid polypeptide reads, in one-letter code: Transketolase (623 aa).

Met-1 carries the N-acetylmethionine modification. Ser-3 is modified (phosphoserine). An N6-acetyllysine mark is found at Lys-6 and Lys-11. Residue His-37 participates in substrate binding. Residues Ser-40 and His-77 each contribute to the thiamine diphosphate site. Ser-104 is modified (phosphoserine). 123–125 (GSL) serves as a coordination point for thiamine diphosphate. N6-acetyllysine is present on Lys-144. Mg(2+) is bound at residue Asp-155. 2 residues coordinate thiamine diphosphate: Gly-156 and Asn-185. Positions 185 and 187 each coordinate Mg(2+). 3 positions are modified to N6-acetyllysine: Lys-204, Lys-232, and Lys-241. Residues Lys-244 and His-258 each contribute to the thiamine diphosphate site. His-258 lines the substrate pocket. At Lys-260 the chain carries N6-acetyllysine. A Phosphotyrosine modification is found at Tyr-275. Thr-287 carries the phosphothreonine modification. The residue at position 295 (Ser-295) is a Phosphoserine. Arg-318 and Ser-345 together coordinate substrate. A Phosphoserine modification is found at Ser-345. Lys-352 is covalently cross-linked (Glycyl lysine isopeptide (Lys-Gly) (interchain with G-Cter in SUMO2)). The active-site Proton donor is Glu-366. Thiamine diphosphate is bound at residue Phe-392. Substrate-binding residues include His-416 and Asp-424. Gln-428 provides a ligand contact to thiamine diphosphate. Arg-474 is a binding site for substrate. Residues Lys-538 and Lys-603 each carry the N6-acetyllysine modification.

It belongs to the transketolase family. Homodimer. Requires Mg(2+) as cofactor. It depends on Ca(2+) as a cofactor. Mn(2+) is required as a cofactor. The cofactor is Co(2+). Thiamine diphosphate serves as cofactor.

It carries out the reaction D-sedoheptulose 7-phosphate + D-glyceraldehyde 3-phosphate = aldehydo-D-ribose 5-phosphate + D-xylulose 5-phosphate. Its function is as follows. Catalyzes the transfer of a two-carbon ketol group from a ketose donor to an aldose acceptor, via a covalent intermediate with the cofactor thiamine pyrophosphate. This chain is Transketolase (TKT), found in Homo sapiens (Human).